The following is a 136-amino-acid chain: Small ribosomal subunit protein uS19 (136 aa).

The tract at residues 117–136 (VQHGDPGMGATRSSMFVPLK) is disordered.

Belongs to the universal ribosomal protein uS19 family.

Functionally, protein S19 forms a complex with S13 that binds strongly to the 16S ribosomal RNA. The sequence is that of Small ribosomal subunit protein uS19 from Methanobrevibacter smithii (strain ATCC 35061 / DSM 861 / OCM 144 / PS).